The sequence spans 273 residues: 3-methyl-2-oxobutanoate hydroxymethyltransferase (273 aa).

Mg(2+)-binding residues include Asp53 and Asp92. Residues 53-54 (DS), Asp92, and Lys120 each bind 3-methyl-2-oxobutanoate. Glu122 provides a ligand contact to Mg(2+). The active-site Proton acceptor is Glu189.

The protein belongs to the PanB family. In terms of assembly, homodecamer; pentamer of dimers. Requires Mg(2+) as cofactor.

The protein localises to the cytoplasm. The catalysed reaction is 3-methyl-2-oxobutanoate + (6R)-5,10-methylene-5,6,7,8-tetrahydrofolate + H2O = 2-dehydropantoate + (6S)-5,6,7,8-tetrahydrofolate. Its pathway is cofactor biosynthesis; (R)-pantothenate biosynthesis; (R)-pantoate from 3-methyl-2-oxobutanoate: step 1/2. Functionally, catalyzes the reversible reaction in which hydroxymethyl group from 5,10-methylenetetrahydrofolate is transferred onto alpha-ketoisovalerate to form ketopantoate. The chain is 3-methyl-2-oxobutanoate hydroxymethyltransferase from Cupriavidus necator (strain ATCC 17699 / DSM 428 / KCTC 22496 / NCIMB 10442 / H16 / Stanier 337) (Ralstonia eutropha).